A 660-amino-acid chain; its full sequence is MKTVVFAYHDMGCLGIEALLAAGYEISAIFTHTDNPGEKAFYGSVARLAAERGIPVYAPDNVNHPLWVERIAQLSPEVIFSFYYRHLICDEILQLAPRGAFNLHGSLLPKYRGRAPLNWVLVNGETETGVTLHRMVKRADAGAIVAQLRVAIAPDDIAITLHHKLCHAARQLLEQTLPAIKHGNILEIAQRENEATCFGRRTPDDSFLEWHKPASVLHNMVRAVADPWPGAFSYVGNQKFTVWSSRVHPHASKAQPGSVISVAPLLIACGDGALEIVTGQTGDGITMQGSQLAQTLGLVQGSRLNSQPACAARRRTRVLILGVNGFIGNHLTERLLREDHYEVYGLDIGSDAISRFLNHPHFHFVEGDISIHSEWIEYHVKKCDVVLPLVAIATPIEYTRNPLRVFELDFEENLRIIRYCVKYRKRIIFPSTSEVYGMCSDKYFDEDHSNLIVGPVNKPRWIYSVSKQLIDRVIWAYGEKEGLQFTLFRPFNWMGPRLDNLNAARIGSSRAITQLILNLVEGSPIKLIDGGKQKRCFTDIRDGIEALYRIIENAGNRCDGEIINIGNPENEASIEELGEMLLASFEKHPLRHYFPPFAGFRVVESSSYYGKGYQDVEHRKPSIRNARRCLDWEPKIDMQETIDETLDFFLRTVDLTDKPS.

The interval 1-304 (MKTVVFAYHD…TLGLVQGSRL (304 aa)) is formyltransferase ArnAFT. A (6R)-10-formyltetrahydrofolate-binding site is contributed by 86–88 (HLI). The active-site Proton donor; for formyltransferase activity is the H104. (6R)-10-formyltetrahydrofolate contacts are provided by residues R114 and 136–140 (VKRAD). Residues 314-660 (RRTRVLILGV…RTVDLTDKPS (347 aa)) are dehydrogenase ArnADH. Residues D347 and 368-369 (DI) contribute to the NAD(+) site. UDP-alpha-D-glucuronate is bound by residues A393, Y398, and 432–433 (TS). Residue E434 is the Proton acceptor; for decarboxylase activity of the active site. UDP-alpha-D-glucuronate contacts are provided by residues R460, N492, 526 to 535 (KLIDGGKQKR), and Y613. R619 functions as the Proton donor; for decarboxylase activity in the catalytic mechanism.

This sequence in the N-terminal section; belongs to the Fmt family. UDP-L-Ara4N formyltransferase subfamily. In the C-terminal section; belongs to the NAD(P)-dependent epimerase/dehydratase family. UDP-glucuronic acid decarboxylase subfamily. In terms of assembly, homohexamer, formed by a dimer of trimers.

It catalyses the reaction UDP-alpha-D-glucuronate + NAD(+) = UDP-beta-L-threo-pentopyranos-4-ulose + CO2 + NADH. The enzyme catalyses UDP-4-amino-4-deoxy-beta-L-arabinose + (6R)-10-formyltetrahydrofolate = UDP-4-deoxy-4-formamido-beta-L-arabinose + (6S)-5,6,7,8-tetrahydrofolate + H(+). The protein operates within nucleotide-sugar biosynthesis; UDP-4-deoxy-4-formamido-beta-L-arabinose biosynthesis; UDP-4-deoxy-4-formamido-beta-L-arabinose from UDP-alpha-D-glucuronate: step 1/3. Its pathway is nucleotide-sugar biosynthesis; UDP-4-deoxy-4-formamido-beta-L-arabinose biosynthesis; UDP-4-deoxy-4-formamido-beta-L-arabinose from UDP-alpha-D-glucuronate: step 3/3. It functions in the pathway bacterial outer membrane biogenesis; lipopolysaccharide biosynthesis. Its function is as follows. Bifunctional enzyme that catalyzes the oxidative decarboxylation of UDP-glucuronic acid (UDP-GlcUA) to UDP-4-keto-arabinose (UDP-Ara4O) and the addition of a formyl group to UDP-4-amino-4-deoxy-L-arabinose (UDP-L-Ara4N) to form UDP-L-4-formamido-arabinose (UDP-L-Ara4FN). The modified arabinose is attached to lipid A and is required for resistance to polymyxin and cationic antimicrobial peptides. This Escherichia coli O127:H6 (strain E2348/69 / EPEC) protein is Bifunctional polymyxin resistance protein ArnA.